Reading from the N-terminus, the 68-residue chain is Large ribosomal subunit protein uL29 (68 aa).

It belongs to the universal ribosomal protein uL29 family.

The sequence is that of Large ribosomal subunit protein uL29 from Maricaulis maris (strain MCS10) (Caulobacter maris).